Here is an 83-residue protein sequence, read N- to C-terminus: uncharacterized protein (83 aa).

The helical transmembrane segment at Ala24–Leu44 threads the bilayer.

The protein resides in the host membrane. This is an uncharacterized protein from Acidianus sp. F28 (AFV-2).